Consider the following 432-residue polypeptide: MAKNVVVVGSQWGDEGKGKVVDLLTEHTGAVVRFQGGHNAGHTLVIDGEQTILHLIPSGVLREGVQCLIGNGVVLAPDALLEEVQELEGKGVPARERLRISPACPLILPCHVALDKAREAARGQARIGTTGRGIGPAYEDKVSRRGIRVADLFHRERLAAKLGELLDYHNFVLQHYFHEQPIDFQDVLERCLTYADELRPMVADIGQLLQEHMDAGRDLLFEGAQGTLLDIDHGTYPFVTSSNTVAGAAATGTGIGPRDLHYVLGITKAYTTRVGSGPFPTELEDEIGDLLGERGREFGATTGRKRRCGWFDAVALRRAAQINSLSGLCITKLDVLDELETLRICIGYQCGDQLWESLPPGAELLADCEPQYIDLPGWQSSTLGVQQWDDLPENARAYLRKLEELIGVPVAIVSTGPDRKETIVLQNPFESA.

Residues 13-19 and 41-43 each bind GTP; these read GDEGKGK and GHT. The Proton acceptor role is filled by D14. Residues D14 and G41 each contribute to the Mg(2+) site. Residues 14–17, 39–42, T130, R144, Q225, T240, and R304 each bind IMP; these read DEGK and NAGH. H42 (proton donor) is an active-site residue. 300-306 is a substrate binding site; it reads ATTGRKR. GTP contacts are provided by residues R306, 332–334, and 414–416; these read KLD and STG.

It belongs to the adenylosuccinate synthetase family. Homodimer. Mg(2+) is required as a cofactor.

The protein localises to the cytoplasm. The catalysed reaction is IMP + L-aspartate + GTP = N(6)-(1,2-dicarboxyethyl)-AMP + GDP + phosphate + 2 H(+). It participates in purine metabolism; AMP biosynthesis via de novo pathway; AMP from IMP: step 1/2. Its function is as follows. Plays an important role in the de novo pathway of purine nucleotide biosynthesis. Catalyzes the first committed step in the biosynthesis of AMP from IMP. In Alkalilimnicola ehrlichii (strain ATCC BAA-1101 / DSM 17681 / MLHE-1), this protein is Adenylosuccinate synthetase.